The sequence spans 525 residues: Bifunctional purine biosynthesis protein PurH (525 aa).

The MGS-like domain maps to 1-145 (MSNVERALIS…KNNASVGIVT (145 aa)).

The protein belongs to the PurH family.

The enzyme catalyses (6R)-10-formyltetrahydrofolate + 5-amino-1-(5-phospho-beta-D-ribosyl)imidazole-4-carboxamide = 5-formamido-1-(5-phospho-D-ribosyl)imidazole-4-carboxamide + (6S)-5,6,7,8-tetrahydrofolate. It catalyses the reaction IMP + H2O = 5-formamido-1-(5-phospho-D-ribosyl)imidazole-4-carboxamide. It participates in purine metabolism; IMP biosynthesis via de novo pathway; 5-formamido-1-(5-phospho-D-ribosyl)imidazole-4-carboxamide from 5-amino-1-(5-phospho-D-ribosyl)imidazole-4-carboxamide (10-formyl THF route): step 1/1. The protein operates within purine metabolism; IMP biosynthesis via de novo pathway; IMP from 5-formamido-1-(5-phospho-D-ribosyl)imidazole-4-carboxamide: step 1/1. In Alcanivorax borkumensis (strain ATCC 700651 / DSM 11573 / NCIMB 13689 / SK2), this protein is Bifunctional purine biosynthesis protein PurH.